Reading from the N-terminus, the 367-residue chain is Alanine racemase (367 aa).

Lysine 35 (proton acceptor; specific for D-alanine) is an active-site residue. Lysine 35 carries the post-translational modification N6-(pyridoxal phosphate)lysine. Arginine 130 provides a ligand contact to substrate. Tyrosine 259 functions as the Proton acceptor; specific for L-alanine in the catalytic mechanism. Methionine 307 is a binding site for substrate.

It belongs to the alanine racemase family. The cofactor is pyridoxal 5'-phosphate.

The catalysed reaction is L-alanine = D-alanine. Its pathway is amino-acid biosynthesis; D-alanine biosynthesis; D-alanine from L-alanine: step 1/1. In terms of biological role, catalyzes the interconversion of L-alanine and D-alanine. May also act on other amino acids. This is Alanine racemase (alr) from Delftia acidovorans (strain DSM 14801 / SPH-1).